Consider the following 357-residue polypeptide: Protein-glutamate methylesterase/protein-glutamine glutaminase 1 (357 aa).

A Response regulatory domain is found at 7 to 125; sequence RAVIIDDSLL…QFDPEEIGNI (119 aa). At D58 the chain carries 4-aspartylphosphate. Residues 162–344 form the CheB-type methylesterase domain; it reads KKSPIQAICI…VEYIEPVTEI (183 aa). Active-site residues include S174, H201, and D297.

Belongs to the CheB family. Post-translationally, phosphorylated by CheA. Phosphorylation of the N-terminal regulatory domain activates the methylesterase activity.

The protein localises to the cytoplasm. The catalysed reaction is [protein]-L-glutamate 5-O-methyl ester + H2O = L-glutamyl-[protein] + methanol + H(+). It carries out the reaction L-glutaminyl-[protein] + H2O = L-glutamyl-[protein] + NH4(+). Its function is as follows. Involved in chemotaxis. Part of a chemotaxis signal transduction system that modulates chemotaxis in response to various stimuli. Catalyzes the demethylation of specific methylglutamate residues introduced into the chemoreceptors (methyl-accepting chemotaxis proteins or MCP) by CheR. Also mediates the irreversible deamidation of specific glutamine residues to glutamic acid. The protein is Protein-glutamate methylesterase/protein-glutamine glutaminase 1 of Leptospira interrogans serogroup Icterohaemorrhagiae serovar Lai (strain 56601).